A 90-amino-acid polypeptide reads, in one-letter code: Small ribosomal subunit protein uS15 (90 aa).

The protein belongs to the universal ribosomal protein uS15 family. Part of the 30S ribosomal subunit. Forms a bridge to the 50S subunit in the 70S ribosome, contacting the 23S rRNA.

Functionally, one of the primary rRNA binding proteins, it binds directly to 16S rRNA where it helps nucleate assembly of the platform of the 30S subunit by binding and bridging several RNA helices of the 16S rRNA. Its function is as follows. Forms an intersubunit bridge (bridge B4) with the 23S rRNA of the 50S subunit in the ribosome. The chain is Small ribosomal subunit protein uS15 from Campylobacter curvus (strain 525.92).